The sequence spans 182 residues: Translation initiation factor IF-3 (182 aa).

It belongs to the IF-3 family. Monomer.

Its subcellular location is the cytoplasm. In terms of biological role, IF-3 binds to the 30S ribosomal subunit and shifts the equilibrium between 70S ribosomes and their 50S and 30S subunits in favor of the free subunits, thus enhancing the availability of 30S subunits on which protein synthesis initiation begins. The protein is Translation initiation factor IF-3 of Tropheryma whipplei (strain TW08/27) (Whipple's bacillus).